Consider the following 1092-residue polypeptide: DNA polymerase II large subunit (1092 aa).

Belongs to the archaeal DNA polymerase II family. As to quaternary structure, heterodimer of a large subunit and a small subunit.

The enzyme catalyses DNA(n) + a 2'-deoxyribonucleoside 5'-triphosphate = DNA(n+1) + diphosphate. The catalysed reaction is Exonucleolytic cleavage in the 3'- to 5'-direction to yield nucleoside 5'-phosphates.. Functionally, possesses two activities: a DNA synthesis (polymerase) and an exonucleolytic activity that degrades single-stranded DNA in the 3'- to 5'-direction. Has a template-primer preference which is characteristic of a replicative DNA polymerase. This is DNA polymerase II large subunit (polC) from Methanothermobacter thermautotrophicus (strain ATCC 29096 / DSM 1053 / JCM 10044 / NBRC 100330 / Delta H) (Methanobacterium thermoautotrophicum).